We begin with the raw amino-acid sequence, 70 residues long: U2-agatoxin-Ao1p (70 aa).

The N-terminal stretch at 1–20 is a signal peptide; it reads MRAIISLILISAMVFSMIAA. The propeptide occupies 21 to 34; sequence VPXXEGLQLSEDER. Intrachain disulfides connect C37–C53, C44–C58, and C52–C68. L69 bears the Leucine amide mark.

This sequence belongs to the neurotoxin 01 (U2-agtx) family. In terms of tissue distribution, expressed by the venom gland.

It localises to the secreted. Functionally, insect active toxin causing rapid but reversible paralysis in crickets. No activity shown in mammals. Does not show effect on mammalian voltage-gated calcium channels. This is U2-agatoxin-Ao1p from Agelena orientalis (Funnel-web spider).